We begin with the raw amino-acid sequence, 52 residues long: Insulin-2 (52 aa).

3 disulfides stabilise this stretch: Cys-7-Cys-38, Cys-19-Cys-51, and Cys-37-Cys-42.

This sequence belongs to the insulin family. In terms of assembly, heterodimer of a B chain and an A chain linked by two disulfide bonds.

It localises to the secreted. Insulin decreases blood glucose concentration. It increases cell permeability to monosaccharides, amino acids and fatty acids. It accelerates glycolysis, the pentose phosphate cycle, and glycogen synthesis in liver. The sequence is that of Insulin-2 from Huso dauricus (Kaluga sturgeon).